We begin with the raw amino-acid sequence, 67 residues long: Metallothionein-A (67 aa).

The protein belongs to the metallothionein superfamily. Type 4 family.

Metallothioneins have a high content of cysteine residues that bind various heavy metals. This is Metallothionein-A from Sphaerechinus granularis (Purple sea urchin).